Here is a 205-residue protein sequence, read N- to C-terminus: Pectinesterase inhibitor 3 (205 aa).

The first 25 residues, 1–25 (MAPTQNLFLVAIAFAVIFTASTVHG), serve as a signal peptide directing secretion. 2 disulfide bridges follow: Cys-38–Cys-47 and Cys-104–Cys-156.

The protein belongs to the PMEI family. In terms of tissue distribution, expressed in apical meristem.

The protein resides in the secreted. It is found in the extracellular space. The protein localises to the apoplast. In terms of biological role, pectin methylesterase (PME) inhibitor that can target PMEs (e.g. PME2 and PME3) in a pH-dependent manner, mainly in slightly acidic conditions (pH 6.3 and 5.0) but not at pH 7.5; this processus relies on changes in the protonation of amino acids involved in intermolecular and intramolecular interactions. Regulates de-methylesterification of pectins in the apical meristem and affects primordia formation and phyllotactic patterning. The chain is Pectinesterase inhibitor 3 from Arabidopsis thaliana (Mouse-ear cress).